A 480-amino-acid polypeptide reads, in one-letter code: Glutamyl-tRNA(Gln) amidotransferase subunit A (480 aa).

Catalysis depends on charge relay system residues Lys-74 and Ser-149. The active-site Acyl-ester intermediate is Ser-173.

It belongs to the amidase family. GatA subfamily. Heterotrimer of A, B and C subunits.

The enzyme catalyses L-glutamyl-tRNA(Gln) + L-glutamine + ATP + H2O = L-glutaminyl-tRNA(Gln) + L-glutamate + ADP + phosphate + H(+). In terms of biological role, allows the formation of correctly charged Gln-tRNA(Gln) through the transamidation of misacylated Glu-tRNA(Gln) in organisms which lack glutaminyl-tRNA synthetase. The reaction takes place in the presence of glutamine and ATP through an activated gamma-phospho-Glu-tRNA(Gln). The chain is Glutamyl-tRNA(Gln) amidotransferase subunit A from Vesicomyosocius okutanii subsp. Calyptogena okutanii (strain HA).